The primary structure comprises 375 residues: Putative F-box/kelch-repeat protein At3g24610 (375 aa).

A disordered region spans residues 1–27 (MSNEAPEVEPHSKRRKKEASPSSSSGF). One can recognise an F-box domain in the interval 25-71 (SGFLQSLPEAVAMICLARVSRLDHAALSLVSKSCRSMVLSPELYQTR). The stretch at 138 to 183 (KINVWGGCKYKHYYDWGEVFDPKTQTWADMSIPKPVREEKIYVVDS) is one Kelch repeat.

The chain is Putative F-box/kelch-repeat protein At3g24610 from Arabidopsis thaliana (Mouse-ear cress).